The sequence spans 578 residues: Octopamine receptor 2 (578 aa).

Residues 1 to 84 (MMSFPIALFA…YDSITIFITV (84 aa)) lie on the Extracellular side of the membrane. N-linked (GlcNAc...) asparagine glycans are attached at residues Asn13, Asn38, Asn46, and Asn59. A helical transmembrane segment spans residues 85 to 107 (AVVLTLITLWTILGNFFVLMALY). The Cytoplasmic segment spans residues 108-117 (RYGTLRTMSN). The helical transmembrane segment at 118-139 (CLIGNLAISDLLLAVTVLPIST) threads the bilayer. Residues 140-156 (VHDLLGYWVFGEFTCTL) are Extracellular-facing. The cysteines at positions 154 and 239 are disulfide-linked. Residues 157-177 (WLCMDVLYCTASIWGLCTVAF) traverse the membrane as a helical segment. At 178-197 (DRYLATVYPVWYHDQRSVRK) the chain is on the cytoplasmic side. A helical transmembrane segment spans residues 198–220 (AVGCIVFVWIFSIVISFAPFIGW). The Extracellular portion of the chain corresponds to 221–251 (QHMIPSFFSFNASIQRYQCILFTSSSYVLYS). An N-linked (GlcNAc...) asparagine glycan is attached at Asn231. Residues 252-272 (SMGSFVIPAILMAFMYVRIFV) form a helical membrane-spanning segment. The Cytoplasmic portion of the chain corresponds to 273–495 (VLHNQSRGVK…ELREQRATKR (223 aa)). A helical transmembrane segment spans residues 496–517 (MLLIMACFCVCWMPFLFMYILR). Residues 518-531 (SVCDTCHMNQHFVA) lie on the Extracellular side of the membrane. A helical membrane pass occupies residues 532–553 (AIIWLGYVNSSLNPVLYTLFND). Over 554–578 (DFKVAFKRLIGARSPSAYRSPGPRR) the chain is Cytoplasmic.

It belongs to the G-protein coupled receptor 1 family.

The protein resides in the cell membrane. Functionally, receptor for octopamine. Octopamine (OA) is a neurotransmitter, neurohormone, and neuromodulator in invertebrates. This receptor induces a long lasting opening of voltage- independent chloride channels, a process which seems to involve protein phosphorylation but does not require either cAPK or PKC. The rank order of potency for agonists is p-synephrine &gt; p-octopamine &gt; xylometazoline &gt; B-HT920 &gt; norepinephrine = clonidine &gt; epinephrine &gt; p-tyramine &gt; phenylephrine = oxymetazoline = mehoxamine = dopamine &gt; serotonin &gt; histamine. For antagonists, the rank order is rauwolscine = mianserin &gt; phentolamine &gt; chlorpromazine &gt; spiperone &gt; yohimbine &gt; propanolol &gt; alprenolol &gt; prazosine &gt; pindolol. The chain is Octopamine receptor 2 from Lymnaea stagnalis (Great pond snail).